A 253-amino-acid chain; its full sequence is Sec-independent protein translocase protein TatC (253 aa).

6 consecutive transmembrane segments (helical) span residues 18 to 38, 69 to 89, 96 to 116, 151 to 171, 187 to 207, and 208 to 228; these read VSVG…KSIF, AIVI…APGL, VILP…AFSY, LILG…LAKV, IVVI…SQIF, and MALP…MVNP. The tract at residues 231-253 is disordered; sequence KDNENNNENNNENNTKENTKSES. The span at 244 to 253 shows a compositional bias: basic and acidic residues; the sequence is NTKENTKSES.

This sequence belongs to the TatC family. The Tat system comprises two distinct complexes: a TatABC complex, containing multiple copies of TatA, TatB and TatC subunits, and a separate TatA complex, containing only TatA subunits. Substrates initially bind to the TatABC complex, which probably triggers association of the separate TatA complex to form the active translocon.

It is found in the cell inner membrane. In terms of biological role, part of the twin-arginine translocation (Tat) system that transports large folded proteins containing a characteristic twin-arginine motif in their signal peptide across membranes. Together with TatB, TatC is part of a receptor directly interacting with Tat signal peptides. This is Sec-independent protein translocase protein TatC from Helicobacter pylori (strain ATCC 700392 / 26695) (Campylobacter pylori).